The following is a 199-amino-acid chain: Protein OPI10 homolog (199 aa).

This sequence belongs to the OPI10 family.

The sequence is that of Protein OPI10 homolog from Aedes aegypti (Yellowfever mosquito).